The primary structure comprises 245 residues: Carbohydrate deacetylase (245 aa).

Mg(2+)-binding residues include histidine 59 and histidine 125.

The protein belongs to the YdjC deacetylase family. In terms of assembly, homodimer. It depends on Mg(2+) as a cofactor.

In terms of biological role, probably catalyzes the deacetylation of acetylated carbohydrates an important step in the degradation of oligosaccharides. The polypeptide is Carbohydrate deacetylase (Listeria welshimeri serovar 6b (strain ATCC 35897 / DSM 20650 / CCUG 15529 / CIP 8149 / NCTC 11857 / SLCC 5334 / V8)).